Here is a 1219-residue protein sequence, read N- to C-terminus: A disintegrin and metalloproteinase with thrombospondin motifs 18 (1219 aa).

Residues 1–47 (MECALLCLCALRAAGPGPPWGPAGLGRLAKALQLCCFCCASVAVALA) form the signal peptide. A propeptide spanning residues 48-284 (SDSGSSGGSG…EYGGTGRPRR (237 aa)) is cleaved from the precursor. N-linked (GlcNAc...) asparagine glycosylation is found at Asn151 and Asn190. Positions 217-248 (YPGSQRTYPGHSPSHTPPASQSQEPEYSHRRW) are disordered. Over residues 218-241 (PGSQRTYPGHSPSHTPPASQSQEP) the composition is skewed to polar residues. Positions 293 to 498 (LNVETLVVAD…PQAGCLVDEP (206 aa)) constitute a Peptidase M12B domain. 11 disulfide bridges follow: Cys369/Cys420, Cys395/Cys402, Cys414/Cys493, Cys453/Cys477, Cys521/Cys546, Cys532/Cys553, Cys541/Cys572, Cys566/Cys577, Cys601/Cys638, Cys605/Cys643, and Cys616/Cys628. His436 provides a ligand contact to Zn(2+). The active site involves Glu437. The Zn(2+) site is built by His440 and His446. In terms of domain architecture, TSP type-1 1 spans 589–644 (HGQWSAWSKWSECSRTCGGGVKFQERHCSNPKPQYGGKYCPGSSRIYKLCNINPCP). 4 N-linked (GlcNAc...) asparagine glycosylation sites follow: Asn745, Asn838, Asn865, and Asn909. TSP type-1 domains lie at 931–990 (CPAY…NSHA), 991–1049 (CPPE…GRCP), 1052–1116 (NRLQ…RTCP), and 1121–1176 (AVAS…NFCP). The PLAC domain occupies 1182-1219 (DDPSCVDFFSWCHLVPQHGVCNHKFYGKQCCRSCTRKS).

Zn(2+) is required as a cofactor. In terms of processing, the precursor is cleaved by a furin endopeptidase. Post-translationally, glycosylated. Can be O-fucosylated by POFUT2 on a serine or a threonine residue found within the consensus sequence C1-X(2)-(S/T)-C2-G of the TSP type-1 repeat domains where C1 and C2 are the first and second cysteine residue of the repeat, respectively. Fucosylated repeats can then be further glycosylated by the addition of a beta-1,3-glucose residue by the glucosyltransferase, B3GALTL. Fucosylation mediates the efficient secretion of ADAMTS family members. Can also be C-glycosylated with one or two mannose molecules on tryptophan residues within the consensus sequence W-X-X-W of the TPRs, and N-glycosylated. These other glycosylations can also facilitate secretion.

It localises to the secreted. It is found in the extracellular space. The protein localises to the extracellular matrix. This is A disintegrin and metalloproteinase with thrombospondin motifs 18 (Adamts18) from Mus musculus (Mouse).